The chain runs to 228 residues: Prepilin leader peptidase/N-methyltransferase (228 aa).

A run of 6 helical transmembrane segments spans residues 18–38, 95–115, 116–136, 147–167, 168–188, and 204–224; these read LWGSFLFLSGLAFGSFFNVVI, RYPLMELATGALFVLAGYLMA, PGVPLLGGLILLSLLLILAAI, LTLPLMWAGLLFNLSATYVPL, AEAVVGAMAGYLSLWSVYWVF, and LLAALGAWLGWQALPQTLLLA.

This sequence belongs to the peptidase A24 family.

The protein resides in the cell inner membrane. It catalyses the reaction Typically cleaves a -Gly-|-Phe- bond to release an N-terminal, basic peptide of 5-8 residues from type IV prepilin, and then N-methylates the new N-terminal amino group, the methyl donor being S-adenosyl-L-methionine.. Plays an essential role in type IV pili and type II pseudopili formation by proteolytically removing the leader sequence from substrate proteins and subsequently monomethylating the alpha-amino group of the newly exposed N-terminal phenylalanine. In Klebsiella pneumoniae, this protein is Prepilin leader peptidase/N-methyltransferase (pulO).